Here is a 324-residue protein sequence, read N- to C-terminus: MAIKKPYRVLLYYMYTTIENPEEFAAEHLQFCNSLELKGRILVAKEGINGTASGTTEQTEKYMEAMKNDPRFAGIVFKVDEADGHAFKKMHVRPRSELVTLRLEDDINPKELTGKYLEPKEFYEAMQQEETIVIDARNDYEYDLGHFRGAIKPEIKSFRELPNWIKENKEVLEGKKILTYCTGGIRCEKFSGWLVREGFEDVSQLHGGIVTYGKDPEVQGELWDGQCYVFDERIAVPVNQKEHVIVGRDHFTNEPCERYVNCANPECNKQILCSEENEAKYLRACSHECRVHPRNRYVKEHELTEEQVAAALEKIEAENQVKLG.

The 95-residue stretch at 127–221 folds into the Rhodanese domain; that stretch reads QQEETIVIDA…YGKDPEVQGE (95 aa). Cys181 (cysteine persulfide intermediate) is an active-site residue.

Belongs to the TrhO family.

It catalyses the reaction uridine(34) in tRNA + AH2 + O2 = 5-hydroxyuridine(34) in tRNA + A + H2O. Catalyzes oxygen-dependent 5-hydroxyuridine (ho5U) modification at position 34 in tRNAs. This is tRNA uridine(34) hydroxylase from Bacillus cytotoxicus (strain DSM 22905 / CIP 110041 / 391-98 / NVH 391-98).